Reading from the N-terminus, the 796-residue chain is Striatin-3 (796 aa).

Methionine 1 is modified (N-acetylmethionine). Over residues 1–13 (MDELAGGGGGGQG) the composition is skewed to gly residues. Positions 1–60 (MDELAGGGGGGQGMAAPPRPQQGPGGNLSLPPGANGAPGGGGPPAAEAAGPPAGPELSRP) are disordered. Positions 71–79 (YIQHEWARF) are caveolin-binding. Positions 77–136 (ARFEMERAHWEVERAELQARIAFLQGERKGQENLKKDLVRRIKMLEYALKQERAKYHKLK) form a coiled coil. A Phosphothreonine modification is found at threonine 150. The interval 166–183 (QNSQLTWKQGRQLLRQYL) is calmodulin-binding. Residues serine 202, serine 214, serine 229, serine 257, and serine 334 each carry the phosphoserine modification. Disordered stretches follow at residues 252–271 (ENAD…IPEG) and 311–335 (EDGE…DLSP). Positions 253–264 (NADDSDEEENDM) are enriched in acidic residues. WD repeat units lie at residues 477-516 (SHFD…PAKK), 530-569 (AHIG…VDPY), 583-622 (AHTD…PCVC), 678-717 (QSSN…MIHS), 720-759 (AHLD…CVQE), and 766-795 (KLDE…AKVF).

This sequence belongs to the WD repeat striatin family. Tetramerizes. Part of the core of STRIPAK complexes composed of PP2A catalytic and scaffolding subunits, the striatins (PP2A regulatory subunits), the striatin-associated proteins MOB4, STRIP1 and STRIP2, PDCD10 and members of the STE20 kinases, such as STK24 and STK26. The STRIPAK complex can be extended by adapter proteins such as SLMAP:SIKE1 or CTTNBP2NL. Interacts with CDC42BPB. In terms of tissue distribution, mainly expressed in the brain and muscles but is also detected at low levels in various tissues such as kidney, spleen and lung.

It is found in the cytoplasm. It localises to the membrane. Functionally, calmodulin-binding scaffolding protein which is the center of the striatin-interacting phosphatase and kinase (STRIPAK) complexes. STRIPAK complexes have critical roles in protein (de)phosphorylation and are regulators of multiple signaling pathways including Hippo, MAPK, nuclear receptor and cytoskeleton remodeling. Different types of STRIPAK complexes are involved in a variety of biological processes such as cell growth, differentiation, apoptosis, metabolism and immune regulation. The polypeptide is Striatin-3 (Strn3) (Mus musculus (Mouse)).